A 353-amino-acid polypeptide reads, in one-letter code: Protein RecA (353 aa).

ATP is bound at residue 65–72 (GPESSGKT). The span at 334 to 345 (DAERAGAEREDN) shows a compositional bias: basic and acidic residues. Residues 334-353 (DAERAGAEREDNAAADDENF) are disordered.

It belongs to the RecA family.

It localises to the cytoplasm. Can catalyze the hydrolysis of ATP in the presence of single-stranded DNA, the ATP-dependent uptake of single-stranded DNA by duplex DNA, and the ATP-dependent hybridization of homologous single-stranded DNAs. It interacts with LexA causing its activation and leading to its autocatalytic cleavage. The polypeptide is Protein RecA (Edwardsiella ictaluri (strain 93-146)).